The sequence spans 171 residues: Tetratricopeptide repeat protein 9C (171 aa).

TPR repeat units follow at residues 8–41, 72–107, and 108–141; these read AQLYKEKGNQCYREGKYRDAVSGYHRALLQLRGL, TDCYNNLAACLLQMEPVNYERVKEYSQKVLERQPDN, and AKALYRAGVAFFHLQDYDQARHYLMAAVNRKPKD.

The protein belongs to the TTC9 family.

The chain is Tetratricopeptide repeat protein 9C (TTC9C) from Bos taurus (Bovine).